Reading from the N-terminus, the 1180-residue chain is DNA-directed RNA polymerase subunit beta (1180 aa).

A compositionally biased stretch (acidic residues) spans 1154–1164; that stretch reads EMKELDDEDEQ. The tract at residues 1154-1180 is disordered; sequence EMKELDDEDEQASDKLNLNIDSTESNV. A compositionally biased stretch (polar residues) spans 1167-1180; the sequence is DKLNLNIDSTESNV.

Belongs to the RNA polymerase beta chain family. In terms of assembly, the RNAP catalytic core consists of 2 alpha, 1 beta, 1 beta' and 1 omega subunit. When a sigma factor is associated with the core the holoenzyme is formed, which can initiate transcription.

The catalysed reaction is RNA(n) + a ribonucleoside 5'-triphosphate = RNA(n+1) + diphosphate. In terms of biological role, DNA-dependent RNA polymerase catalyzes the transcription of DNA into RNA using the four ribonucleoside triphosphates as substrates. This Halalkalibacterium halodurans (strain ATCC BAA-125 / DSM 18197 / FERM 7344 / JCM 9153 / C-125) (Bacillus halodurans) protein is DNA-directed RNA polymerase subunit beta.